A 594-amino-acid chain; its full sequence is Zinc finger protein 703 (594 aa).

Positions 1–14 are enriched in polar residues; it reads MSDSPAGSNPRTPE. Disordered regions lie at residues 1–37, 100–298, and 345–370; these read MSDSPAGSNPRTPESSGSGGGSSSGGGGGKRPAVPAV, TCSQ…GHVA, and LVGGQLSGGLGLPPGKPPSSSPLTGA. N-acetylserine is present on Ser-2. Positions 17–30 are enriched in gly residues; sequence GSGGGSSSGGGGGK. Low complexity-rich tracts occupy residues 134 to 145, 177 to 191, and 212 to 225; these read RSAPGAASAAAA, GSSSVSSTTSSSSSS, and GASVSTSSNSSSPG. A compositionally biased stretch (basic and acidic residues) spans 246-256; it reads ELDKKEQEAKP. Ser-257 is subject to Phosphoserine. The span at 345–356 shows a compositional bias: gly residues; sequence LVGGQLSGGLGL. The segment at 460–488 adopts a C2H2-type zinc-finger fold; that stretch reads HSCNWVAASGPCDKRFATSEELLSHLRTH. Omega-N-methylarginine is present on Arg-584.

Belongs to the Elbow/Noc family. Interacts with DCAF7 and PHB2. Interacts with TLE4; increases transcriptional repression. In terms of tissue distribution, expressed in mammary epithelium.

It is found in the nucleus. The protein localises to the cytoplasm. In terms of biological role, transcriptional corepressor which does not bind directly to DNA and may regulate transcription through recruitment of histone deacetylases to gene promoters. Regulates cell adhesion, migration and proliferation. May be required for segmental gene expression during hindbrain development. The chain is Zinc finger protein 703 (Znf703) from Mus musculus (Mouse).